A 151-amino-acid chain; its full sequence is Small ribosomal subunit protein uS15z (151 aa).

This sequence belongs to the universal ribosomal protein uS15 family.

This Oryza sativa subsp. japonica (Rice) protein is Small ribosomal subunit protein uS15z.